The primary structure comprises 311 residues: MNKYDLIERMNTRFAELEVTLHQLHQQLDDLPLIAARVFSLPEIEKGTEHQPIEQITVNITEGEHAKKLGLQHFQRLFLHHQGQHVSSKAALRLPGVLCFSVTDKELIECQDIIKKTNQLKAELEHIITVESGLPSEQRFEFVHTHLHGLITLNTYRTITPLINPSSVRFGWANKHIIKNVTREDILLQLEKSLNAGRAVPPFTREQWRELISLEINDVQRLPEKTRLKIKRPVKVQPIARVWYQEQQKQVQHPCPMPLIAFCQHQLGAELPKLGELTDYDVKHIKHKYKPDAKPLRLLVPRLHLYVELEP.

It belongs to the Tus family.

The protein localises to the cytoplasm. In terms of biological role, trans-acting protein required for termination of DNA replication. Binds to DNA replication terminator sequences (terA to terF) to prevent the passage of replication forks. The termination efficiency will be affected by the affinity of this protein for the terminator sequence. The protein is DNA replication terminus site-binding protein of Yersinia pestis.